A 419-amino-acid chain; its full sequence is LanC-like protein 3 homolog (419 aa).

Belongs to the LanC-like protein family.

This Drosophila melanogaster (Fruit fly) protein is LanC-like protein 3 homolog.